A 20-amino-acid chain; its full sequence is Antifreeze protein (20 aa).

N-glycosylated and O-glycosylated.

It is found in the secreted. Its subcellular location is the extracellular space. Functionally, antifreeze proteins bind to the surface of ice crystals and inhibit the growth of these crystals, this inhibition causes thermal hysteresis. Causes the shape of ice crystals to change from hexagonal to a bipyramidal shape with rugged facets. Inhibits recrystallization of ice crystals. The polypeptide is Antifreeze protein (Antarctomyces psychrotrophicus).